Consider the following 187-residue polypeptide: Orotate phosphoribosyltransferase (187 aa).

Residues arginine 99, lysine 100, lysine 103, histidine 105, and 125 to 133 (DDVITTGGS) each bind 5-phospho-alpha-D-ribose 1-diphosphate. 2 residues coordinate orotate: threonine 129 and arginine 157.

Belongs to the purine/pyrimidine phosphoribosyltransferase family. PyrE subfamily. As to quaternary structure, homodimer. It depends on Mg(2+) as a cofactor.

It catalyses the reaction orotidine 5'-phosphate + diphosphate = orotate + 5-phospho-alpha-D-ribose 1-diphosphate. It functions in the pathway pyrimidine metabolism; UMP biosynthesis via de novo pathway; UMP from orotate: step 1/2. Catalyzes the transfer of a ribosyl phosphate group from 5-phosphoribose 1-diphosphate to orotate, leading to the formation of orotidine monophosphate (OMP). The protein is Orotate phosphoribosyltransferase of Leptospira borgpetersenii serovar Hardjo-bovis (strain JB197).